The chain runs to 368 residues: 2-aminoethylphosphonate--pyruvate transaminase (368 aa).

Position 192 is an N6-(pyridoxal phosphate)lysine (Lys192).

The protein belongs to the class-V pyridoxal-phosphate-dependent aminotransferase family. PhnW subfamily. Homodimer. Pyridoxal 5'-phosphate is required as a cofactor.

The enzyme catalyses (2-aminoethyl)phosphonate + pyruvate = phosphonoacetaldehyde + L-alanine. Its function is as follows. Involved in phosphonate degradation. The polypeptide is 2-aminoethylphosphonate--pyruvate transaminase (Pseudomonas putida (strain ATCC 47054 / DSM 6125 / CFBP 8728 / NCIMB 11950 / KT2440)).